A 319-amino-acid polypeptide reads, in one-letter code: MADTATGSPTSHGHVSPFVEIARADWAALAPATHLPLRETELVQLRGIGDRLDMREVEDVYLPLSRLLNLYVTGTKKLHRDTSAFLGERAKSTPFIIGVAGSVAVGKSTVARLLREMLARWDDTPRVELVTTDGFLHPNAELERRGLMERKGFPESYDRRALLRFVTQVKSGVPEVRAPFYSHLAYDIVPGAEVVVRQPDVLIIEGLNVLQPAASGAKLAVSDLFDFSIYVDARTHDIAQWYEERFLSLQRGAFSNPRSYFHRYAELSPAEAVARARGIWSAINEPNLEQNIRPTRSRATLVLRKDADHSVANVLLRKL.

Residue 101–108 (GSVAVGKS) coordinates ATP.

It belongs to the prokaryotic pantothenate kinase family.

Its subcellular location is the cytoplasm. It catalyses the reaction (R)-pantothenate + ATP = (R)-4'-phosphopantothenate + ADP + H(+). It participates in cofactor biosynthesis; coenzyme A biosynthesis; CoA from (R)-pantothenate: step 1/5. The chain is Pantothenate kinase from Clavibacter sepedonicus (Clavibacter michiganensis subsp. sepedonicus).